The chain runs to 411 residues: 2-acylphloroglucinol 4-prenyltransferase, chloroplastic (411 aa).

Residues 1–91 constitute a chloroplast transit peptide; it reads MELSSVSSFS…CNDQRGNSIR (91 aa). The next 8 helical transmembrane spans lie at 159 to 179, 198 to 218, 226 to 246, 253 to 273, 278 to 298, 333 to 353, 356 to 376, and 391 to 411; these read LLGM…NQIF, ISVE…FILI, LLTS…VPPF, ITAF…VYYA, LGLA…ITFM, LLGT…AIIW, AFKS…LIFQ, and KSFY…YLFI.

It belongs to the UbiA prenyltransferase family. It depends on Mg(2+) as a cofactor. As to expression, expressed in glandular trichomes called lupulin glands, and in early stage and mature cones. Detected in leaves, but not in root, stem and first stage of flowers. No expression in male flowers.

It localises to the plastid. It is found in the chloroplast membrane. The enzyme catalyses a 2-acylphloroglucinol + dimethylallyl diphosphate = a 2-acyl-4-prenylphloroglucinol + diphosphate. Its pathway is secondary metabolite biosynthesis. Involved in the biosynthesis of prenylated phenolics natural products which contribute to the bitter taste of beer and display broad biological activities. Catalyzes the first prenylation step in the beta-bitter acid pathway. Abble to transfer dimethylallyl diphosphate (DMAPP) or geranyl diphosphate (GPP) to phlorisovalerophenone (PIVP), phlorisobutrylphenone (PIMP) and naringenin chalcone. Can also use phlorisobutyrophenone (PIBP) and phlormethylbutanophenone (PMBP) as substrates, but not 6'-O-methylated chalcone or naringenin. This chain is 2-acylphloroglucinol 4-prenyltransferase, chloroplastic, found in Humulus lupulus (European hop).